The sequence spans 72 residues: Penaeidin-2d (72 aa).

The N-terminal stretch at 1 to 21 (MRLVVCLVFLASFALVCQGGA) is a signal peptide. Gln22 bears the Pyrrolidone carboxylic acid mark. Disulfide bonds link Cys45-Cys59, Cys48-Cys66, and Cys60-Cys67. At Lys71 the chain carries Lysine amide.

Belongs to the penaeidin family.

Its subcellular location is the cytoplasmic granule. Antibacterial and antifungal activity. Presents chitin-binding activity. The sequence is that of Penaeidin-2d from Penaeus setiferus (Atlantic white shrimp).